The chain runs to 664 residues: DNA primase (664 aa).

Residues 40-64 form a CHC2-type zinc finger; the sequence is CPFHKEKTPSFTVSPDKQFYYCFGC. The segment covering 94–104 has biased composition (basic and acidic residues); that stretch reads GMDVPREERGG. The segment at 94–115 is disordered; sequence GMDVPREERGGRGHTPRQPTDS. Residues 262–344 form the Toprim domain; sequence DEIMVVEGYM…GKRVRFLFLP (83 aa). 3 residues coordinate Mg(2+): Glu268, Asp312, and Asp314. Residues 483-521 form a disordered region; it reads PRKSWNKDKKPWDGKKWDGKKKWDKGGRGDFKAPQRTPV. Basic and acidic residues predominate over residues 487 to 515; that stretch reads WNKDKKPWDGKKWDGKKKWDKGGRGDFKA.

This sequence belongs to the DnaG primase family. As to quaternary structure, monomer. Interacts with DnaB. Zn(2+) serves as cofactor. The cofactor is Mg(2+).

The enzyme catalyses ssDNA + n NTP = ssDNA/pppN(pN)n-1 hybrid + (n-1) diphosphate.. In terms of biological role, RNA polymerase that catalyzes the synthesis of short RNA molecules used as primers for DNA polymerase during DNA replication. This chain is DNA primase, found in Pseudomonas aeruginosa (strain ATCC 15692 / DSM 22644 / CIP 104116 / JCM 14847 / LMG 12228 / 1C / PRS 101 / PAO1).